The sequence spans 1842 residues: Fatty acid synthase alpha subunit pigJ (1842 aa).

The segment at 120-184 (GAPVEEEGSK…TPAGGSTTPD (65 aa)) is disordered. A compositionally biased stretch (low complexity) spans 140–175 (SGSSRTATTAKATVTTPSSSSPETAPPAASTPSQGT). The Carrier domain maps to 184–262 (DIPLSAKHVV…DALQGNFPGK (79 aa)). At Ser-222 the chain carries O-(pantetheine 4'-phosphoryl)serine. The beta-ketoacyl reductase stretch occupies residues 611-807 (GKTVLVTGAG…CGAAIGWVRG (197 aa)). The Ketosynthase family 3 (KS3) domain occupies 1058–1585 (KEFLQEIVVE…QKGGIAVVVA (528 aa)). Active-site for beta-ketoacyl synthase activity residues include Cys-1244, His-1470, and His-1511. The segment at 1649 to 1672 (KARVGGHPENNNNNNNNSSSKRNT) is disordered. The segment covering 1658–1668 (NNNNNNNNSSS) has biased composition (low complexity). Residues Asp-1725, Val-1726, and Glu-1727 each coordinate Mg(2+). Acetyl-CoA contacts are provided by residues 1725–1727 (DVE), Ser-1761, 1770–1780 (EAVFKSLQTPS), and 1823–1825 (ITH). Thr-1824 and His-1825 together coordinate Mg(2+).

The protein belongs to the thiolase-like superfamily. Fungal fatty acid synthetase subunit alpha family. In terms of assembly, [Alpha(6)beta(6)] hexamers of two multifunctional subunits (alpha and beta).

The catalysed reaction is acetyl-CoA + n malonyl-CoA + 2n NADPH + 4n H(+) = a long-chain-acyl-CoA + n CoA + n CO2 + 2n NADP(+).. It catalyses the reaction a fatty acyl-[ACP] + malonyl-[ACP] + H(+) = a 3-oxoacyl-[ACP] + holo-[ACP] + CO2. It carries out the reaction a (3R)-hydroxyacyl-[ACP] + NADP(+) = a 3-oxoacyl-[ACP] + NADPH + H(+). Its pathway is secondary metabolite biosynthesis. Its function is as follows. Fatty acid synthase alpha subunit; part of the gene cluster that mediates the biosynthesis of azaphilone pigments (MonAzPs), a complex mixture of compounds with a common azaphilone skeleton very widely used as food colorants. PigJ and pigK form the two subunits of a dedicated fungal fatty acid synthase (FAS) that produces the side chain fatty acyl moiety of MonAzPs, a beta-keto fatty acid. The chain length control of the pigJ-pigK FAS is somewhat flexible as MonAzPs features either a beta-ketooctanoic or a beta-ketodecanoic acid moiety. The beta-ketoacyl-ACP probably serves as the substrate for the acetyltransferase pigD that directly transfers the fatty acyl chain to the C-4 alcohol of the pyran ring. The first step of the pathway is performed by the nrPKS pigA that forms the hexaketide precursor from successive condensations of five malonyl-CoA units, with a simple acetyl-CoA starter unit. The role of esterase pigG is not clear, but it may play at most a supplementary role in the formation of the benzaldehyde produced by the pigA nrPKS. This very reactive benzaldehyde is intercepted by the pigC ketoreductase that to provide the first stable enzyme-free MonAzPs intermediate, 6-(4-hydroxy-2-oxopentyl)-3-methyl-2,4-dioxocyclohexane carbaldehyde, also known as M7PKS-1. The FAD-dependent monooxygenase pigN hydroxylates M7PKS-1 at C-4, which triggers the formation of the pyran ring. PigJ, pigK and pigD are involved in the acetylation of the pyran ring. PigJ and pigK form the two subunits of a dedicated fungal FAS that produces the side chain fatty acyl moiety of MonAzPs and pigD transfers the fatty acyl chain to the C-4 alcohol. PigM and pigO are involved in the elimination of the omega-1 alcohol. PigM acts as an O-acetyltransferase that synthesizes the putative O-11 acetyl intermediate whereas pigO eliminates acetic acid to yield an intermediate with a C10(11) double bond. The dehydration of the C-11 alcohol followed by the reduction of the C6(7) double bond by the NAD(P)H-dependent oxidoreductase pigE increases the electrophilicity of the C-5 ketone of the resulting acyl benzopyran. This in turn sets up the C-5 ketone for an intramolecular Knoevenagel aldol condensation with the C-20 enol of the side chain. This condensation affords the characteristic linear tricyclic carbon skeletons of the yellow pigments that serve as the common precursors for the classical yellow pigments monascin and ankaflavin, orange pigments rubopunctatin and monascorubrin, and red pigments ribropunctamine and monascorubramine. The FAD-dependent oxidoreductase pigF is especially invoved in the biosynthesis of orange and red pigments via desaturation of C6(7). The protein is Fatty acid synthase alpha subunit pigJ of Monascus ruber (Mold).